Reading from the N-terminus, the 487-residue chain is Protein DETOXIFICATION 10 (487 aa).

12 helical membrane passes run 35-55 (LICF…IQII), 73-93 (FAVS…SCAL), 122-142 (LVCL…VILG), 155-175 (AAWL…IRYF), 184-204 (LLVT…LLVY), 211-231 (IGGA…LGSF), 264-284 (AAML…SGLL), 293-313 (VLSI…AIAA), 333-353 (IVVY…SMSL), 377-397 (MAPL…LSGV), 412-432 (FGAF…WVHL), and 435-455 (VGLW…LALV).

It belongs to the multi antimicrobial extrusion (MATE) (TC 2.A.66.1) family.

It is found in the membrane. The polypeptide is Protein DETOXIFICATION 10 (Arabidopsis thaliana (Mouse-ear cress)).